The primary structure comprises 820 residues: Leucine--tRNA ligase (820 aa).

Residues 40 to 51 (PYPSGAGLHVGH) carry the 'HIGH' region motif. The short motif at 601 to 605 (KMSKS) is the 'KMSKS' region element. An ATP-binding site is contributed by Lys-604.

Belongs to the class-I aminoacyl-tRNA synthetase family.

Its subcellular location is the cytoplasm. The catalysed reaction is tRNA(Leu) + L-leucine + ATP = L-leucyl-tRNA(Leu) + AMP + diphosphate. The protein is Leucine--tRNA ligase of Chlamydia abortus (strain DSM 27085 / S26/3) (Chlamydophila abortus).